An 82-amino-acid polypeptide reads, in one-letter code: Putative membrane protein insertion efficiency factor (82 aa).

Belongs to the UPF0161 family.

The protein resides in the cell inner membrane. Could be involved in insertion of integral membrane proteins into the membrane. The chain is Putative membrane protein insertion efficiency factor from Francisella tularensis subsp. novicida (strain U112).